We begin with the raw amino-acid sequence, 197 residues long: Dephospho-CoA kinase (197 aa).

The region spanning 2-197 is the DPCK domain; sequence RIGLTGGIAS…YDALAKTAHE (196 aa). 10-15 contacts ATP; the sequence is ASGKSL.

This sequence belongs to the CoaE family.

It localises to the cytoplasm. It catalyses the reaction 3'-dephospho-CoA + ATP = ADP + CoA + H(+). It functions in the pathway cofactor biosynthesis; coenzyme A biosynthesis; CoA from (R)-pantothenate: step 5/5. Functionally, catalyzes the phosphorylation of the 3'-hydroxyl group of dephosphocoenzyme A to form coenzyme A. In Shouchella clausii (strain KSM-K16) (Alkalihalobacillus clausii), this protein is Dephospho-CoA kinase.